We begin with the raw amino-acid sequence, 118 residues long: Protein BEX4 (118 aa).

Residues 14-50 (VEKDKKDKKGGKASKQSEEEPHHLEEVENKKPGGNVR) are disordered. Over residues 28 to 44 (KQSEEEPHHLEEVENKK) the composition is skewed to basic and acidic residues. Residues 30–88 (SEEEPHHLEEVENKKPGGNVRRKVRRLVPNFLWAIPNRHVDRNEGGEDVGRFVVQGTEV) are interaction with SIRT2. The tract at residues 30 to 118 (SEEEPHHLEE…DNHYDFCLIP (89 aa)) is interaction with alpha-tubulin. Zn(2+) is bound at residue cysteine 115.

It belongs to the BEX family. As to quaternary structure, interacts with alpha-tubulin. Interacts with SIRT2. Ubiquitinated and degraded by the proteasome. In terms of tissue distribution, expressed in both Sertoli and germ cells as well as interstitial area of the testis (at protein level).

The protein resides in the cytoplasm. It is found in the cytoskeleton. It localises to the spindle pole. Its subcellular location is the nucleus. Its function is as follows. May play a role in microtubule deacetylation by negatively regulating the SIRT2 deacetylase activity toward alpha-tubulin and thereby participate in the control of cell cycle progression and genomic stability. In absence of reductive stress, acts as a pseudosubstrate for the CRL2(FEM1B) complex: associates with FEM1B via zinc, thereby preventing association between FEM1B and its substrates. The sequence is that of Protein BEX4 from Mus musculus (Mouse).